Consider the following 175-residue polypeptide: tRNA-specific adenosine deaminase 2 (175 aa).

In terms of domain architecture, CMP/dCMP-type deaminase spans 8 to 133 (EEIQNWMHKA…SVLNVSGDDI (126 aa)). Histidine 59 contributes to the Zn(2+) binding site. The active-site Proton donor is glutamate 61. 2 residues coordinate Zn(2+): cysteine 95 and cysteine 98.

This sequence belongs to the cytidine and deoxycytidylate deaminase family. ADAT2 subfamily. The cofactor is Zn(2+).

The enzyme catalyses adenosine(34) in tRNA + H2O + H(+) = inosine(34) in tRNA + NH4(+). Probably participates in deamination of adenosine-34 to inosine in many tRNAs. The chain is tRNA-specific adenosine deaminase 2 (adat2) from Xenopus laevis (African clawed frog).